The sequence spans 466 residues: Chromosomal replication initiator protein DnaA (466 aa).

The interval 1-85 (MSLSLWQHCL…FEVGNKPVSA (85 aa)) is domain I, interacts with DnaA modulators. Positions 82–122 (PVSARTTESVPKTVTHPAVNSTPTNSQPVRPSWDNQPQSQL) are disordered. Residues 85-122 (ARTTESVPKTVTHPAVNSTPTNSQPVRPSWDNQPQSQL) are compositionally biased toward polar residues. A domain II region spans residues 85 to 129 (ARTTESVPKTVTHPAVNSTPTNSQPVRPSWDNQPQSQLPELNYRS). Positions 130-346 (NVNPKHKFDN…GALNRVIANA (217 aa)) are domain III, AAA+ region. The ATP site is built by glycine 174, glycine 176, lysine 177, and threonine 178. Positions 347 to 466 (NFTGRAITID…FSNLIRTLSS (120 aa)) are domain IV, binds dsDNA.

It belongs to the DnaA family. As to quaternary structure, oligomerizes as a right-handed, spiral filament on DNA at oriC.

It is found in the cytoplasm. Its function is as follows. Plays an essential role in the initiation and regulation of chromosomal replication. ATP-DnaA binds to the origin of replication (oriC) to initiate formation of the DNA replication initiation complex once per cell cycle. Binds the DnaA box (a 9 base pair repeat at the origin) and separates the double-stranded (ds)DNA. Forms a right-handed helical filament on oriC DNA; dsDNA binds to the exterior of the filament while single-stranded (ss)DNA is stabiized in the filament's interior. The ATP-DnaA-oriC complex binds and stabilizes one strand of the AT-rich DNA unwinding element (DUE), permitting loading of DNA polymerase. After initiation quickly degrades to an ADP-DnaA complex that is not apt for DNA replication. Binds acidic phospholipids. The chain is Chromosomal replication initiator protein DnaA from Proteus mirabilis (strain HI4320).